The sequence spans 420 residues: Glucose-1-phosphate adenylyltransferase (420 aa).

Residues Tyr-107, Gly-173, Glu-188–Lys-189, and Ser-206 each bind alpha-D-glucose 1-phosphate.

The protein belongs to the bacterial/plant glucose-1-phosphate adenylyltransferase family. As to quaternary structure, homotetramer.

It carries out the reaction alpha-D-glucose 1-phosphate + ATP + H(+) = ADP-alpha-D-glucose + diphosphate. Its pathway is glycan biosynthesis; glycogen biosynthesis. In terms of biological role, involved in the biosynthesis of ADP-glucose, a building block required for the elongation reactions to produce glycogen. Catalyzes the reaction between ATP and alpha-D-glucose 1-phosphate (G1P) to produce pyrophosphate and ADP-Glc. In Shewanella sp. (strain ANA-3), this protein is Glucose-1-phosphate adenylyltransferase.